The primary structure comprises 427 residues: Phosphatase PSR1 (427 aa).

S-palmitoyl cysteine attachment occurs at residues cysteine 9 and cysteine 10. Over residues 14 to 34 (TTQSNSNSAYRQQQSSSLNKN) the composition is skewed to polar residues. A disordered region spans residues 14 to 223 (TTQSNSNSAY…SNDADDEDDE (210 aa)). Positions 35–48 (RSVKHSNTKSRTRG) are enriched in basic residues. The span at 49–80 (VHQTNSPPSKTNSAATFSSTERSTGKSGISTN) shows a compositional bias: polar residues. Over residues 104–118 (KVEKRISKDDLYEEK) the composition is skewed to basic and acidic residues. Position 110 is a phosphoserine (serine 110). Over residues 119 to 130 (YEVDEDEEIDDE) the composition is skewed to acidic residues. Basic and acidic residues predominate over residues 131 to 151 (DNRRSRGIVQEKGDAVKDTSR). Lysine 154 participates in a covalent cross-link: Glycyl lysine isopeptide (Lys-Gly) (interchain with G-Cter in ubiquitin). The span at 155-183 (QQQQQQQQSQPQPQPQSQSQSQSQSQSQQ) shows a compositional bias: low complexity. Polar residues predominate over residues 184-214 (RGPTVQVSSDHLIQDMNLSRVSSSSQASETS). An FCP1 homology domain is found at 253-411 (STKGKKCLIL…LDIIPLLEDL (159 aa)).

In terms of assembly, interacts with WHI2.

The protein localises to the cell membrane. Functionally, has phosphatase activity in vitro. Involved in the response to sodium and lithium ion stress (but not to potassium or sorbitol stress) by inducing transcription of the sodium pump ENA1/PMR2. Acts through a calcineurin-independent pathway and is functionally redundant with PSR2. Also involved in the general stress response; acts together with WHI2 to activate stress response element (STRE)-mediated gene expression, possibly through dephosphorylation of MSN2. The chain is Phosphatase PSR1 (PSR1) from Saccharomyces cerevisiae (strain ATCC 204508 / S288c) (Baker's yeast).